The sequence spans 172 residues: Adenylate kinase isoenzyme 6 (172 aa).

ATP contacts are provided by G13, G15, K16, T17, and T18. The NMP stretch occupies residues 33–56 (NVGDLAREEQLYDGYDEEYDCPIL). The segment at 33-56 (NVGDLAREEQLYDGYDEEYDCPIL) is NMPbind. The LID stretch occupies residues 108-118 (TRGYNEKKLTD). R109 and K148 together coordinate ATP.

Belongs to the adenylate kinase family. AK6 subfamily. Monomer and homodimer. Interacts with small ribosomal subunit protein uS11. Not a structural component of 43S pre-ribosomes, but transiently interacts with them by binding to uS11. Interacts with COIL (via C-terminus). Expressed in heart, brain, placenta, lung, liver, skeletal muscle, kidney, pancreas, chorionic villi and the central nervous system.

The protein resides in the cytoplasm. It localises to the nucleus. It is found in the nucleoplasm. The protein localises to the cajal body. The catalysed reaction is AMP + ATP = 2 ADP. It catalyses the reaction ATP + H2O = ADP + phosphate + H(+). Its function is as follows. Broad-specificity nucleoside monophosphate (NMP) kinase that catalyzes the reversible transfer of the terminal phosphate group between nucleoside triphosphates and monophosphates. Also has ATPase activity. Involved in the late cytoplasmic maturation steps of the 40S ribosomal particles, specifically 18S rRNA maturation. While NMP activity is not required for ribosome maturation, ATPase activity is. Associates transiently with small ribosomal subunit protein uS11. ATP hydrolysis breaks the interaction with uS11. May temporarily remove uS11 from the ribosome to enable a conformational change of the ribosomal RNA that is needed for the final maturation step of the small ribosomal subunit. Its NMP activity may have a role in nuclear energy homeostasis. AMP and dAMP are the preferred substrates, but CMP and dCMP are also good substrates. IMP is phosphorylated to a much lesser extent. All nucleoside triphosphates ATP, GTP, UTP, CTP, dATP, dCTP, dGTP, and TTP are accepted as phosphate donors. CTP is the best phosphate donor, followed by UTP, ATP, GTP and dCTP. May be involved in regulation of Cajal body (CB) formation. In Homo sapiens (Human), this protein is Adenylate kinase isoenzyme 6.